Here is a 157-residue protein sequence, read N- to C-terminus: Deoxyuridine 5'-triphosphate nucleotidohydrolase (157 aa).

Substrate contacts are provided by residues 76 to 78, asparagine 89, 93 to 95, and lysine 103; these read RSG and TID.

It belongs to the dUTPase family. It depends on Mg(2+) as a cofactor.

It carries out the reaction dUTP + H2O = dUMP + diphosphate + H(+). The protein operates within pyrimidine metabolism; dUMP biosynthesis; dUMP from dCTP (dUTP route): step 2/2. Its function is as follows. This enzyme is involved in nucleotide metabolism: it produces dUMP, the immediate precursor of thymidine nucleotides and it decreases the intracellular concentration of dUTP so that uracil cannot be incorporated into DNA. The protein is Deoxyuridine 5'-triphosphate nucleotidohydrolase of Brucella abortus (strain 2308).